Consider the following 245-residue polypeptide: 8-amino-3,8-dideoxy-manno-octulosonate cytidylyltransferase (245 aa).

The protein belongs to the KdsB family.

Its subcellular location is the cytoplasm. The catalysed reaction is 8-amino-3,8-dideoxy-alpha-D-manno-octulosonate + CTP = CMP-8-amino-3,8-dideoxy-alpha-D-manno-oct-2-ulosonate + diphosphate. The protein operates within bacterial outer membrane biogenesis; lipopolysaccharide biosynthesis. In terms of biological role, activates KDO8N (a required 8-carbon sugar) for incorporation into bacterial lipopolysaccharide in the Shewanella genus. The protein is 8-amino-3,8-dideoxy-manno-octulosonate cytidylyltransferase of Shewanella oneidensis (strain ATCC 700550 / JCM 31522 / CIP 106686 / LMG 19005 / NCIMB 14063 / MR-1).